The sequence spans 669 residues: MRRNTDQESPIMSYYSSFFFLFLFSFLTSFRVSAQDPTYVYHTCQNTANYTSNSTYNNNLKTLLASLSSRNASYSTGFQNATVGQAPDRVTGLFNCRGDVSTEVCRRCVSFAVNDTLTRCPNQKEATLYYDECVLRYSNQNILSTLITTGGVILVNTRNVTSNQLDLLSDLVLPTLNQAATVALNSSKKFGTRKNNFTALQSFYGLVQCTPDLTRQDCSRCLQLVINQIPTDRIGARIINPSCTSRYEIYAFYTESAVPPPPPPPSISTPPVSAPPRSGKDGNSKVLVIAIVVPIIVAVLLFIAGYCFLTRRARKSYYTPSAFAGDDITTADSLQLDYRTIQTATDDFVESNKIGQGGFGEVYKGTLSDGTEVAVKRLSKSSGQGEVEFKNEVVLVAKLQHRNLVRLLGFCLDGEERVLVYEYVPNKSLDYFLFDPAKKGQLDWTRRYKIIGGVARGILYLHQDSRLTIIHRDLKASNILLDADMNPKIADFGMARIFGLDQTEENTSRIVGTYGYMSPEYAMHGQYSMKSDVYSFGVLVLEIISGKKNSSFYQTDGAHDLVSYAWGLWSNGRPLELVDPAIVENCQRNEVVRCVHIGLLCVQEDPAERPTLSTIVLMLTSNTVTLPVPRQPGLFFQSRIGKDPLDTDTTSKSLLGSVDDASITDIHPR.

Positions 1–34 are cleaved as a signal peptide; the sequence is MRRNTDQESPIMSYYSSFFFLFLFSFLTSFRVSA. Residues 35-285 are Extracellular-facing; the sequence is QDPTYVYHTC…PRSGKDGNSK (251 aa). Gnk2-homologous domains lie at 38–142 and 148–252; these read TYVY…NQNI and TTGG…IYAF. N49, N53, N71, and N80 each carry an N-linked (GlcNAc...) asparagine glycan. 2 disulfides stabilise this stretch: C96/C105 and C108/C133. N-linked (GlcNAc...) asparagine glycosylation is found at N114, N159, N185, and N196. Cystine bridges form between C209-C218 and C221-C243. The segment covering 260-274 has biased composition (pro residues); it reads PPPPPPSISTPPVSA. The tract at residues 260-280 is disordered; that stretch reads PPPPPPSISTPPVSAPPRSGK. Residues 286–306 traverse the membrane as a helical segment; it reads VLVIAIVVPIIVAVLLFIAGY. At 307-669 the chain is on the cytoplasmic side; that stretch reads CFLTRRARKS…DASITDIHPR (363 aa). The Protein kinase domain occupies 348–634; it reads FVESNKIGQG…TLPVPRQPGL (287 aa). ATP-binding positions include 354-362 and K376; that span reads IGQGGFGEV. The residue at position 421 (Y421) is a Phosphotyrosine. D473 functions as the Proton acceptor in the catalytic mechanism. A Phosphoserine modification is found at S477. T513 is modified (phosphothreonine). At Y521 the chain carries Phosphotyrosine.

The protein belongs to the protein kinase superfamily. Ser/Thr protein kinase family. CRK subfamily. Interacts with CRKIP1 (KAPP), CRKIP2 and CRKIP3, three kinase-associated type 2C proteins.

Its subcellular location is the membrane. It catalyses the reaction L-seryl-[protein] + ATP = O-phospho-L-seryl-[protein] + ADP + H(+). It carries out the reaction L-threonyl-[protein] + ATP = O-phospho-L-threonyl-[protein] + ADP + H(+). The chain is Cysteine-rich receptor-like protein kinase 10 (CRK10) from Arabidopsis thaliana (Mouse-ear cress).